A 775-amino-acid polypeptide reads, in one-letter code: METRCSLLFLSLILLYLPKPGSGFGSSGPIAASFGGSAFFCAIDASGRQDVICWGKNYSSPSSPSSSSSSSSIASSTSASYNIPSMAVLSGGDGFLCGILSNTSQAFCFSSLGSSSGMDLVPLAYRTTAYSQIAAGNSHVCAVRGAYYSDHDSGTIDCWEITRATNNNSLIAKENPNFYDQIVSNLVFNNIVSGDGFSCGGIRDGGMLCFGPNSSNLGFNTTSDNFQVLAAGKNSVCAILNLSREVKCWGEDESFVNSPMNDSRFVSLTAGPRHFCGIREDNHEVECWGNSNFSLIPKGSGFKAIASSDFIVCGIREEDLVLDCWMVNGSSTLAYDPPLELCSPGMCRAGPCNEKEFAFNASILNEPDLTSLCVRKELMVCSPCGSDCSHGFFLSSSCTANSDRICTPCSLCQNSSCSDICKLHNSNFPDKHWHQLQRLVLIIGSCASALLIIIIGCCVVPRIVTSPNKEDGAANQFKSCIGKPDLDTDQPLENVSPAPSVTPFAQVFRLSELKDATNGFKEFNELGRGSYGFVYKAVLADGRQVAVKRANAATIIHTNTREFETELEILCNIRHCNIVNLLGYSTEMGERLLVYEYMPHGTLHDHLHSGFSPLSWSLRIKIAMQTAKGLEYLHNEAEPRIIHGDVKSSNVLLDSEWVARVADFGLVTSSNEKNLDIKRDVYDFGVVLLEILTGRKRYDRDCDPPEIVEWTVPVIREGKAAAIVDTYIALPRNVEPLLKLADVAELCVREDPNQQPTMSELANWLEHVARDALIF.

The N-terminal stretch at Met-1–Gly-23 is a signal peptide. Topologically, residues Phe-24 to Leu-439 are extracellular. 10 N-linked (GlcNAc...) asparagine glycosylation sites follow: Asn-57, Asn-102, Asn-167, Asn-213, Asn-220, Asn-241, Asn-261, Asn-292, Asn-328, and Asn-360. The TNFR-Cys repeat unit spans residues Pro-351–Cys-406. 3 disulfide bridges follow: Cys-352-Cys-381, Cys-384-Cys-398, and Cys-388-Cys-406. The N-linked (GlcNAc...) asparagine glycan is linked to Asn-414. The helical transmembrane segment at Val-440–Val-460 threads the bilayer. Over Pro-461–Phe-775 the chain is Cytoplasmic. The region spanning Phe-520 to Arg-770 is the Protein kinase domain. Residues Leu-526–Val-534 and Lys-548 contribute to the ATP site. Catalysis depends on Asp-645, which acts as the Proton acceptor.

It belongs to the protein kinase superfamily. Ser/Thr protein kinase family. As to quaternary structure, homodimer. Expressed in roots, leaves, shoot apical meristems (SAM), and floral buds.

It is found in the membrane. It catalyses the reaction L-seryl-[protein] + ATP = O-phospho-L-seryl-[protein] + ADP + H(+). The catalysed reaction is L-threonyl-[protein] + ATP = O-phospho-L-threonyl-[protein] + ADP + H(+). In terms of biological role, serine/threonine-protein kinase with low activity. The sequence is that of Serine/threonine-protein kinase-like protein CCR1 (CCR1) from Arabidopsis thaliana (Mouse-ear cress).